Here is a 333-residue protein sequence, read N- to C-terminus: Adenosine deaminase (333 aa).

Zn(2+) contacts are provided by His-12 and His-14. Substrate is bound by residues His-14, Asp-16, and Gly-170. Residue His-197 participates in Zn(2+) binding. Glu-200 (proton donor) is an active-site residue. Residue Asp-278 coordinates Zn(2+). Asp-279 is a binding site for substrate.

It belongs to the metallo-dependent hydrolases superfamily. Adenosine and AMP deaminases family. Adenosine deaminase subfamily. Zn(2+) serves as cofactor.

It carries out the reaction adenosine + H2O + H(+) = inosine + NH4(+). It catalyses the reaction 2'-deoxyadenosine + H2O + H(+) = 2'-deoxyinosine + NH4(+). Its function is as follows. Catalyzes the hydrolytic deamination of adenosine and 2-deoxyadenosine. The chain is Adenosine deaminase from Escherichia coli O7:K1 (strain IAI39 / ExPEC).